Here is a 495-residue protein sequence, read N- to C-terminus: Glutamate--tRNA ligase (495 aa).

The short motif at 12-22 (PSPTGHLHIGN) is the 'HIGH' region element. The 'KMSKS' region signature appears at 259–263 (KLSKR). Lysine 262 contributes to the ATP binding site.

The protein belongs to the class-I aminoacyl-tRNA synthetase family. Glutamate--tRNA ligase type 1 subfamily. In terms of assembly, monomer.

The protein resides in the cytoplasm. It catalyses the reaction tRNA(Glu) + L-glutamate + ATP = L-glutamyl-tRNA(Glu) + AMP + diphosphate. Its function is as follows. Catalyzes the attachment of glutamate to tRNA(Glu) in a two-step reaction: glutamate is first activated by ATP to form Glu-AMP and then transferred to the acceptor end of tRNA(Glu). This chain is Glutamate--tRNA ligase, found in Pediococcus pentosaceus (strain ATCC 25745 / CCUG 21536 / LMG 10740 / 183-1w).